The primary structure comprises 76 residues: Precursor of CEP7 (76 aa).

The signal sequence occupies residues 1 to 27; that stretch reads MAKCTLTSLILLLIVLVLIQESHIVEG. Positions 28-61 are excised as a propeptide; the sequence is RPLKSSRISNVSKKFAAGNSNLSSKLTTEDHSLD. Asn-37 and Asn-48 each carry an N-linked (GlcNAc...) asparagine glycan. Residues 49–76 form a disordered region; that stretch reads LSSKLTTEDHSLDAFRPTNPGNSPGIGH. 3 positions are modified to hydroxyproline: Pro-65, Pro-68, and Pro-72.

Belongs to the C-terminally encoded plant signaling peptide (CEP) family. As to quaternary structure, interacts with CEP receptors (e.g. CEPR1 and CEPR2). Post-translationally, the mature small signaling peptide is generated by proteolytic processing of the longer precursor.

It is found in the secreted. It localises to the extracellular space. The protein localises to the apoplast. In terms of biological role, extracellular signaling peptide that may regulate primary root growth rate and systemic nitrogen (N)-demand signaling. Mediates up-regulation of genes involved in N uptake and assimilation pathways. The chain is Precursor of CEP7 from Arabidopsis thaliana (Mouse-ear cress).